The primary structure comprises 663 residues: Alcohol oxidase 1 (663 aa).

8–38 (DILVLGGGSSGSCIAGRLANLDHSLKVGLIE) lines the FAD pocket. H567 (proton acceptor) is an active-site residue. Positions 661 to 663 (ARF) match the Microbody targeting signal motif.

The protein belongs to the GMC oxidoreductase family. Homooctamer. It depends on FAD as a cofactor.

The protein localises to the peroxisome matrix. The catalysed reaction is a primary alcohol + O2 = an aldehyde + H2O2. It participates in energy metabolism; methane degradation. Its function is as follows. Major isoform of alcohol oxidase, which catalyzes the oxidation of methanol to formaldehyde and hydrogen peroxide, the first step in the methanol utilization pathway of methylotrophic yeasts. The protein is Alcohol oxidase 1 (AOX1) of Komagataella phaffii (strain ATCC 76273 / CBS 7435 / CECT 11047 / NRRL Y-11430 / Wegner 21-1) (Yeast).